Reading from the N-terminus, the 1182-residue chain is IQ motif and SEC7 domain-containing protein 3 (1182 aa).

A coiled-coil region spans residues 20–56; the sequence is AIVQNQQSLIHTQRERIDELERRLDELSAENRSLWEH. Disordered stretches follow at residues 62 to 157 and 230 to 275; these read AQPP…ERPP and AAGR…RQQP. Residues 63–78 are compositionally biased toward pro residues; the sequence is QPPPGLVPPSSAPLPA. Low complexity-rich tracts occupy residues 79-105 and 254-263; these read APAT…AAAP and GAGAASPRAG. Serine 259 carries the post-translational modification Phosphoserine. One can recognise an IQ domain in the interval 315–344; the sequence is SRRAACTIQTAFRQYQLSKNFEKIRNSLLE. 2 disordered regions span residues 444 to 479 and 521 to 616; these read AGPP…AHSG and EPAA…ASAS. Over residues 533 to 548 the composition is skewed to basic and acidic residues; the sequence is SGREAPEAPAVGREDA. The segment covering 555–569 has biased composition (low complexity); it reads AEAAASGAADGATAP. The segment covering 572–581 has biased composition (acidic residues); that stretch reads EEEEEEEETA. Positions 598–616 are enriched in low complexity; the sequence is SSSSTSTKSAKSGSEASAS. One can recognise an SEC7 domain in the interval 644–837; sequence TLSTDTLRKR…VGIYERIQQK (194 aa). Residues 850–983 enclose the PH domain; sequence TKVEKSIVGM…LKESIAEVTE (134 aa). The stretch at 964–992 forms a coiled coil; it reads SDEMQKFVEDLKESIAEVTELEQIRIEWE. Disordered stretches follow at residues 1002–1090 and 1121–1182; these read LSFK…PGTL and YTSS…RSLV. Over residues 1022–1033 the composition is skewed to basic and acidic residues; it reads AKREAALRERPA. Residues 1043 to 1052 are compositionally biased toward polar residues; sequence NRLQTSQHNS. Over residues 1061–1087 the composition is skewed to pro residues; that stretch reads PVPPPDLQPSPPRQQTPPLPPPPPTPP. Residues 1121–1132 are compositionally biased toward low complexity; the sequence is YTSSSSDSCGST. Residues 1147–1157 show a composition bias toward pro residues; that stretch reads PPLPPPPPPYN.

The protein belongs to the BRAG family. In terms of assembly, interacts with DLG1 and DLG4. Interacts with GPHN. As to expression, expressed specifically in the adult brain, predominantly in the cerebral cortex and the olfactory bulb, but not in the fetal brain. Expressed only in mature neurons, but not in undifferentiated neural stem precursor cells (NSPCs), nor in glioma cells.

It is found in the cytoplasm. The protein resides in the postsynaptic density. Functionally, acts as a guanine nucleotide exchange factor (GEF) for ARF1. This Homo sapiens (Human) protein is IQ motif and SEC7 domain-containing protein 3 (IQSEC3).